A 283-amino-acid polypeptide reads, in one-letter code: Phosphatidylglycerol--prolipoprotein diacylglyceryl transferase (283 aa).

The next 3 helical transmembrane spans lie at 14–34, 56–76, and 88–108; these read LGPL…ALFL, MLMY…VLFY, and IFMV…VLIA. Arginine 139 contacts a 1,2-diacyl-sn-glycero-3-phospho-(1'-sn-glycerol). The helical transmembrane segment at 258–278 threads the bilayer; the sequence is MGQWLSLPMIVIGVALLVFFG.

The protein belongs to the Lgt family.

Its subcellular location is the cell inner membrane. The enzyme catalyses L-cysteinyl-[prolipoprotein] + a 1,2-diacyl-sn-glycero-3-phospho-(1'-sn-glycerol) = an S-1,2-diacyl-sn-glyceryl-L-cysteinyl-[prolipoprotein] + sn-glycerol 1-phosphate + H(+). The protein operates within protein modification; lipoprotein biosynthesis (diacylglyceryl transfer). Catalyzes the transfer of the diacylglyceryl group from phosphatidylglycerol to the sulfhydryl group of the N-terminal cysteine of a prolipoprotein, the first step in the formation of mature lipoproteins. In Chromobacterium violaceum (strain ATCC 12472 / DSM 30191 / JCM 1249 / CCUG 213 / NBRC 12614 / NCIMB 9131 / NCTC 9757 / MK), this protein is Phosphatidylglycerol--prolipoprotein diacylglyceryl transferase.